Here is a 517-residue protein sequence, read N- to C-terminus: Succinyl-CoA:3-ketoacid coenzyme A transferase 2, mitochondrial (517 aa).

The transit peptide at 1–39 (MAALRLLASVLGRGVPAGGSGLALSQGCARCFATSPRLR) directs the protein to the mitochondrion. The active-site 5-glutamyl coenzyme A thioester intermediate is the Glu-341.

It belongs to the 3-oxoacid CoA-transferase family. As to quaternary structure, homodimer. As to expression, testis specific.

Its subcellular location is the mitochondrion. It carries out the reaction a 3-oxo acid + succinyl-CoA = a 3-oxoacyl-CoA + succinate. It participates in ketone metabolism; succinyl-CoA degradation; acetoacetyl-CoA from succinyl-CoA: step 1/1. Its function is as follows. Key enzyme for ketone body catabolism. Transfers the CoA moiety from succinate to acetoacetate. Formation of the enzyme-CoA intermediate proceeds via an unstable anhydride species formed between the carboxylate groups of the enzyme and substrate. The polypeptide is Succinyl-CoA:3-ketoacid coenzyme A transferase 2, mitochondrial (OXCT2) (Homo sapiens (Human)).